The primary structure comprises 92 residues: Large ribosomal subunit protein bL27 (92 aa).

A propeptide spanning residues 1–8 (MLMNLQFF) is cleaved from the precursor. Positions 11-30 (HKGGGSTANGRDSAGRRLGA) are disordered.

This sequence belongs to the bacterial ribosomal protein bL27 family. The N-terminus is cleaved by ribosomal processing cysteine protease Prp.

This Lactiplantibacillus plantarum (strain ATCC BAA-793 / NCIMB 8826 / WCFS1) (Lactobacillus plantarum) protein is Large ribosomal subunit protein bL27.